The primary structure comprises 98 residues: Small ribosomal subunit protein bS16 (98 aa).

This sequence belongs to the bacterial ribosomal protein bS16 family.

The polypeptide is Small ribosomal subunit protein bS16 (Pseudothermotoga lettingae (strain ATCC BAA-301 / DSM 14385 / NBRC 107922 / TMO) (Thermotoga lettingae)).